We begin with the raw amino-acid sequence, 303 residues long: DCN1-like protein 3 (303 aa).

Residues 1 to 40 are disordered; sequence MGQCVTKCKNPSSTLGSKNGERESSKPHKRSSSHKEEHMS. Gly-2 carries N-myristoyl glycine lipidation. One can recognise a DCUN1 domain in the interval 85 to 277; that stretch reads SSLQRIEELF…LFDTFVEWEM (193 aa).

As to quaternary structure, may interact (via the DCUN1 domain) with unneddylated cullins.

Its subcellular location is the cell membrane. The protein localises to the cytoplasm. It localises to the nucleus. It is found in the perinuclear region. Its function is as follows. Contributes to the neddylation of all cullins by transferring NEDD8 from N-terminally acetylated NEDD8-conjugating E2s enzyme to different cullin C-terminal domain-RBX complexes. At the cell membrane, can promote and as well inhibit cullins neddylation. The chain is DCN1-like protein 3 from Xenopus laevis (African clawed frog).